Reading from the N-terminus, the 119-residue chain is RNA guanine-N7 methyltransferase activating subunit (119 aa).

The interaction with RNMT stretch occupies residues Met-1–Gly-55. The disordered stretch occupies residues Leu-30–Tyr-119. The residue at position 36 (Ser-36) is a Phosphoserine. The RNMT-activating domain motif lies at Ser-36–Glu-42. The span at Ala-47–Asn-61 shows a compositional bias: polar residues. The RNA-binding stretch occupies residues Asn-56–Tyr-119. Positions Arg-62–Trp-73 are enriched in basic and acidic residues. Arg-85 is subject to Omega-N-methylarginine. A Phosphoserine modification is found at Ser-86. Positions Asn-89–Gln-112 are enriched in low complexity.

It belongs to the RAM family. Interacts with RNMT; this interaction enhances mRNA binding and cap methyltransferase activity.

It localises to the nucleus. Its function is as follows. Regulatory subunit of the mRNA-capping methyltransferase RNMT:RAMAC complex that methylates the N7 position of the added guanosine to the 5'-cap structure of mRNAs. Promotes the recruitment of the methyl donor, S-adenosyl-L-methionine, to RNMT. Regulates RNMT expression by a post-transcriptional stabilizing mechanism. Binds RNA. The protein is RNA guanine-N7 methyltransferase activating subunit (Ramac) of Mus musculus (Mouse).